The following is a 184-amino-acid chain: Fungal defensin copsin (184 aa).

An N-terminal signal peptide occupies residues 1–23 (MKLSTSLLAIVAVASTFIGNALS). The propeptide occupies 24-127 (ATTVPGCFAE…LGRVLPVEKR (104 aa)). Gln-128 carries the pyrrolidone carboxylic acid modification. 6 disulfides stabilise this stretch: Cys-130/Cys-159, Cys-137/Cys-167, Cys-145/Cys-175, Cys-149/Cys-177, Cys-152/Cys-184, and Cys-162/Cys-181.

It belongs to the invertebrate defensin family. Post-translationally, contains a unique connectivity of 6 cysteine bonds in contrast to most other CS-alpha-beta defensins which are linked by 3 or 4 disulfide bonds. In terms of processing, disulfide bonds are essential for structural integrity and antibacterial activity, since activity is lost after treatment with reducing agents. Thanks to disulfide bonds and N-terminal pyroglutamate, the protein is extremely stable in a wide pH and temperature range and insensitive toward proteases.

Its subcellular location is the secreted. It is found in the target cell membrane. Its function is as follows. Antimicrobial peptide that acts against Gram-positive bacteria (Listeria spp., Enterococcus spp., B.subtilis, B.anthracis, P.aeruginosa). Is not active against Gram-negative bacteria. It selectively inhibits peptidoglycan biosynthesis through complex formation with the cell wall precursor lipid II (1:1 molar ratio), probably anchoring lipid II to the membrane, thus inhibiting cell wall synthesis. The interaction with lipid II involves the third position of the pentapeptide. Shows bactericidal activity at about 2-fold minimal inhibitory concentrations (MIC), but does not form pore across the membrane. This is Fungal defensin copsin from Coprinopsis cinerea (Inky cap fungus).